A 323-amino-acid chain; its full sequence is Putative divalent cation/proton antiporter TMEM165 (323 aa).

The N-terminal stretch at 1–33 (MAASARGSGRAPTRRLLVLLLLPLLWAPAGVRA) is a signal peptide. Residues 34-88 (GPEEDLSHRNQEPPAPAQQLQPQPAAVQGLEPARAEKGFTPAAPVHTNREDAATQ) are Lumenal-facing. Basic and acidic residues predominate over residues 35–44 (PEEDLSHRNQ). The tract at residues 35-60 (PEEDLSHRNQEPPAPAQQLQPQPAAV) is disordered. Low complexity predominate over residues 50-59 (AQQLQPQPAA). Residues 89-109 (ANLGFIHAFVAAISVIIVSEL) traverse the membrane as a helical segment. The Cytoplasmic portion of the chain corresponds to 110–126 (GDKTFFIAAIMAMRYNR). Residues 127–147 (LTVLAGAMLALALMTCLSVLF) traverse the membrane as a helical segment. The Lumenal portion of the chain corresponds to 148–151 (GYAT). A helical membrane pass occupies residues 152-172 (TVIPRVYTYYVSTALFAIFGI). At 173–227 (RMLREGLKMSPDEGQEELEEVQAELKKKDEEFQRTKLLNGPDVETGTSTAIPQKK) the chain is on the cytoplasmic side. Residues 184–211 (DEGQEELEEVQAELKKKDEEFQRTKLLN) are a coiled coil. Residues 228-248 (WLHFISPIFVQALTLTFLAEW) traverse the membrane as a helical segment. Topologically, residues 249 to 266 (GDRSQLTTIVLAAREDPY) are lumenal. Residues 267–287 (GVAVGGTVGHCLCTGLAVIGG) form a helical membrane-spanning segment. Topologically, residues 288–298 (RMIAQKISVRT) are cytoplasmic. The chain crosses the membrane as a helical span at residues 299-319 (VTIIGGIVFLAFAFSALFISP). Residues 320-323 (ESGF) lie on the Lumenal side of the membrane.

Belongs to the GDT1 family.

It is found in the golgi apparatus membrane. It carries out the reaction Ca(2+)(in) + n H(+)(out) = Ca(2+)(out) + n H(+)(in). It catalyses the reaction Mn(2+)(in) + n H(+)(out) = Mn(2+)(out) + n H(+)(in). Its function is as follows. Putative divalent cation:proton antiporter that exchanges calcium or manganese ions for protons across the Golgi membrane. Mediates the reversible transport of calcium or manganese to the Golgi lumen driven by the proton gradient and possibly the membrane potential generated by V-ATPase. Provides calcium or manganese cofactors to resident Golgi enzymes and contributes to the maintenance of an acidic luminal Golgi pH required for proper functioning of the secretory pathway. Promotes Ca(2+) storage within the Golgi lumen of the mammary epithelial cells to be then secreted into milk. The transport mechanism and stoichiometry remains to be elucidated. The polypeptide is Putative divalent cation/proton antiporter TMEM165 (Rattus norvegicus (Rat)).